The sequence spans 475 residues: MNLRIVYLRSLNIQGLTKMTDDKNNLLHRGLDNIQPPFSNFIRAQATASVFLLVATITALWWANSDYSSTYQMLKHMQIGFFLGDIELQASLKHIINDGLMVIFFFFIGLEIKREVLAGDLAIAENRRMLILCALGGMICPAVIYSLFNWSLDSQIGWGIPMATDTAFALGALTLVRKHIPISLLAFLVGLAIVDDVGAIVVIALFYTQEISVIFLSISFSLIAFLAIANYAGVLRPIFYILIGIAAWWTMLKSGVHPTFAGVAIALTVPARPMLPPDELLSKVKAKITAMKKNKGHQLDALANREDHEQVLDVRDFAEHGSAPLRRWEDALDLPVSLFVLPLFALVNAGVEVSFSSLIETLQHSVGLGIVIGLVIGKFVGISGACWLGLRYKIGSLPEGINMQHVIGMSLIAGIGFTMSTFIATLGFDSQPEYLQSAKGSILFASLLSAILGLLYLRIIAAKKAPNSASKNGEN.

A run of 12 helical transmembrane segments spans residues A44 to N64, L92 to I112, L130 to W150, I156 to V176, A186 to F206, I211 to Y231, A232 to L252, G255 to L275, A331 to V351, L368 to L388, V406 to L426, and I442 to A462.

Belongs to the NhaA Na(+)/H(+) (TC 2.A.33) antiporter family.

The protein localises to the cell inner membrane. It catalyses the reaction Na(+)(in) + 2 H(+)(out) = Na(+)(out) + 2 H(+)(in). Na(+)/H(+) antiporter that extrudes sodium in exchange for external protons. This Psychromonas ingrahamii (strain DSM 17664 / CCUG 51855 / 37) protein is Na(+)/H(+) antiporter NhaA 2.